Consider the following 158-residue polypeptide: Putative peptidoglycan-binding-like protein (158 aa).

A signal peptide spans 1-24 (MRSPKVKFLTIFTFCIFITKMSFA).

The protein belongs to the IagB/IpgF/P19 family.

Its subcellular location is the periplasm. This Escherichia coli (strain K12) protein is Putative peptidoglycan-binding-like protein (pbl).